Here is a 182-residue protein sequence, read N- to C-terminus: NADH-quinone oxidoreductase subunit B (182 aa).

Positions 61, 62, 126, and 156 each coordinate [4Fe-4S] cluster.

This sequence belongs to the complex I 20 kDa subunit family. As to quaternary structure, NDH-1 is composed of 14 different subunits. Subunits NuoB, C, D, E, F, and G constitute the peripheral sector of the complex. [4Fe-4S] cluster is required as a cofactor.

Its subcellular location is the cell inner membrane. It carries out the reaction a quinone + NADH + 5 H(+)(in) = a quinol + NAD(+) + 4 H(+)(out). Functionally, NDH-1 shuttles electrons from NADH, via FMN and iron-sulfur (Fe-S) centers, to quinones in the respiratory chain. The immediate electron acceptor for the enzyme in this species is believed to be ubiquinone. Couples the redox reaction to proton translocation (for every two electrons transferred, four hydrogen ions are translocated across the cytoplasmic membrane), and thus conserves the redox energy in a proton gradient. This chain is NADH-quinone oxidoreductase subunit B, found in Xanthomonas oryzae pv. oryzae (strain PXO99A).